A 92-amino-acid chain; its full sequence is Small ribosomal subunit protein uS17 (92 aa).

Belongs to the universal ribosomal protein uS17 family. As to quaternary structure, part of the 30S ribosomal subunit.

In terms of biological role, one of the primary rRNA binding proteins, it binds specifically to the 5'-end of 16S ribosomal RNA. This is Small ribosomal subunit protein uS17 from Corynebacterium urealyticum (strain ATCC 43042 / DSM 7109).